We begin with the raw amino-acid sequence, 158 residues long: Cytochrome c-type biogenesis protein CcmE (158 aa).

The Cytoplasmic portion of the chain corresponds to 1-23; that stretch reads MNSQSFKNFPSLKFISKKRRKER. Residues 24-44 form a helical; Signal-anchor for type II membrane protein membrane-spanning segment; it reads LLMVLLCLFIMAITTGLIVYA. Residues 45–158 lie on the Periplasmic side of the membrane; the sequence is MRNTANFFRT…DRLKKHHDIK (114 aa). Heme-binding residues include His-138 and Tyr-142.

The protein belongs to the CcmE/CycJ family.

The protein localises to the cell inner membrane. Its function is as follows. Heme chaperone required for the biogenesis of c-type cytochromes. Transiently binds heme delivered by CcmC and transfers the heme to apo-cytochromes in a process facilitated by CcmF and CcmH. In Bartonella bacilliformis (strain ATCC 35685 / KC583 / Herrer 020/F12,63), this protein is Cytochrome c-type biogenesis protein CcmE.